The sequence spans 482 residues: MLKARKVHFIGVGGYGMSALAMVLKQRGTAVSGSDVAASARTQRLAEAGVEVHIGAHDAAHIEGADVVVYSTQVPEDNPELAAARARGLRVLHRSELLAEFLNGRSIAVAGTHGKTTTSSMVACLLEKAGLDPTILLGGDLEVIGGTGKAGRGDWVVAEADESDRSFLRYHPRVAVVTNVEPEHLEFWEGSFARIQEGFRQFLRQVQPGGLAALCADDPTLRSIGQELRNQPGVVHVVFYGTHPEAEWRAENIRPWEKGIVYDCVRDGRLLGEVRLPIPGRHNALNSLGALVAGDYAGLSFRQMQETLLSFGNARRRFEVWADVDGIRVVDDYAHHPTEIRATLAAAREQAGRRVVAVFQPQRYSRTHWLMDEFATAFQDADVLVLTRIYSPPGERPIPGVSAEALARRIQANTGRPVAVISDQEEILRFLLAEVRPGDTVITMGAGDIWKVARALAQALQSRAVTRTASSGSGRPAPGSGR.

111 to 117 is a binding site for ATP; sequence GTHGKTT.

This sequence belongs to the MurCDEF family.

Its subcellular location is the cytoplasm. It catalyses the reaction UDP-N-acetyl-alpha-D-muramate + L-alanine + ATP = UDP-N-acetyl-alpha-D-muramoyl-L-alanine + ADP + phosphate + H(+). It participates in cell wall biogenesis; peptidoglycan biosynthesis. Its function is as follows. Cell wall formation. This Symbiobacterium thermophilum (strain DSM 24528 / JCM 14929 / IAM 14863 / T) protein is UDP-N-acetylmuramate--L-alanine ligase.